Reading from the N-terminus, the 339-residue chain is Ribonucleoside-diphosphate reductase subunit beta (339 aa).

Asp87 and His121 together coordinate Fe cation. Tyr125 is an active-site residue. His215 lines the Fe cation pocket.

The protein belongs to the ribonucleoside diphosphate reductase small chain family. In terms of assembly, tetramer of two alpha and two beta subunits. Fe cation serves as cofactor.

It catalyses the reaction a 2'-deoxyribonucleoside 5'-diphosphate + [thioredoxin]-disulfide + H2O = a ribonucleoside 5'-diphosphate + [thioredoxin]-dithiol. Functionally, provides the precursors necessary for DNA synthesis. Catalyzes the biosynthesis of deoxyribonucleotides from the corresponding ribonucleotides. The sequence is that of Ribonucleoside-diphosphate reductase subunit beta (nrdF) from Mycoplasma pneumoniae (strain ATCC 29342 / M129 / Subtype 1) (Mycoplasmoides pneumoniae).